The chain runs to 362 residues: GDSL esterase/lipase At5g22810 (362 aa).

A signal peptide spans 1–28 (MGFSGIWLNLYVVFGSLMVFERMVVMVV). S44 serves as the catalytic Nucleophile. N-linked (GlcNAc...) asparagine glycosylation is found at N159, N162, N264, and N329. Active-site residues include D337 and H340.

This sequence belongs to the 'GDSL' lipolytic enzyme family.

It localises to the secreted. The chain is GDSL esterase/lipase At5g22810 from Arabidopsis thaliana (Mouse-ear cress).